The chain runs to 300 residues: Ornithine carbamoyltransferase (300 aa).

Carbamoyl phosphate-binding positions include 49–52 (STRT), Gln76, Arg100, and 127–130 (HPCQ). L-ornithine is bound by residues Asn158, Asp218, and 222–223 (SM). Residues 258–259 (CL) and Arg286 each bind carbamoyl phosphate.

Belongs to the aspartate/ornithine carbamoyltransferase superfamily. OTCase family.

It is found in the cytoplasm. It carries out the reaction carbamoyl phosphate + L-ornithine = L-citrulline + phosphate + H(+). It functions in the pathway amino-acid biosynthesis; L-arginine biosynthesis; L-arginine from L-ornithine and carbamoyl phosphate: step 1/3. Reversibly catalyzes the transfer of the carbamoyl group from carbamoyl phosphate (CP) to the N(epsilon) atom of ornithine (ORN) to produce L-citrulline. In Nitratidesulfovibrio vulgaris (strain ATCC 29579 / DSM 644 / CCUG 34227 / NCIMB 8303 / VKM B-1760 / Hildenborough) (Desulfovibrio vulgaris), this protein is Ornithine carbamoyltransferase.